The primary structure comprises 94 residues: Large ribosomal subunit protein eL36 (94 aa).

The span at 1–25 shows a compositional bias: basic residues; it reads MKNAYKKVRVRYPVKRPDVKRKQRG. The tract at residues 1-30 is disordered; sequence MKNAYKKVRVRYPVKRPDVKRKQRGPRAET.

This sequence belongs to the eukaryotic ribosomal protein eL36 family. Component of the large ribosomal subunit.

The protein localises to the cytoplasm. This is Large ribosomal subunit protein eL36 (RPL36) from Encephalitozoon cuniculi (strain GB-M1) (Microsporidian parasite).